Consider the following 220-residue polypeptide: NADH-quinone oxidoreductase subunit I (220 aa).

2 4Fe-4S ferredoxin-type domains span residues 71–102 (LQRL…IITH) and 112–141 (DSYT…MGNR). Positions 82, 85, 88, 92, 121, 124, 127, and 131 each coordinate [4Fe-4S] cluster. Residues 187-220 (MQATPLDYVQEPSKEESQEETPTNPESNKGDENV) are disordered.

This sequence belongs to the complex I 23 kDa subunit family. NDH-1 is composed of 14 different subunits. Subunits NuoA, H, J, K, L, M, N constitute the membrane sector of the complex. [4Fe-4S] cluster is required as a cofactor.

The protein localises to the cell inner membrane. It catalyses the reaction a quinone + NADH + 5 H(+)(in) = a quinol + NAD(+) + 4 H(+)(out). Its function is as follows. NDH-1 shuttles electrons from NADH, via FMN and iron-sulfur (Fe-S) centers, to quinones in the respiratory chain. The immediate electron acceptor for the enzyme in this species is believed to be ubiquinone. Couples the redox reaction to proton translocation (for every two electrons transferred, four hydrogen ions are translocated across the cytoplasmic membrane), and thus conserves the redox energy in a proton gradient. The polypeptide is NADH-quinone oxidoreductase subunit I (Helicobacter pylori (strain ATCC 700392 / 26695) (Campylobacter pylori)).